Reading from the N-terminus, the 147-residue chain is Small ribosomal subunit protein uS12 (147 aa).

It belongs to the universal ribosomal protein uS12 family. As to quaternary structure, part of the 30S ribosomal subunit.

In terms of biological role, with S4 and S5 plays an important role in translational accuracy. Located at the interface of the 30S and 50S subunits. This Pyrococcus horikoshii (strain ATCC 700860 / DSM 12428 / JCM 9974 / NBRC 100139 / OT-3) protein is Small ribosomal subunit protein uS12.